The primary structure comprises 231 residues: Sporulation protein RMD6 (231 aa).

Its subcellular location is the peroxisome. Functionally, required for sporulation. Required for meiotic nuclear division. The chain is Sporulation protein RMD6 (RMD6) from Saccharomyces cerevisiae (strain ATCC 204508 / S288c) (Baker's yeast).